Consider the following 520-residue polypeptide: Cilia- and flagella-associated protein 157 (520 aa).

The tract at residues 1–22 (MAPKKSVSKAGKELEVKKKGGK) is disordered. Over residues 10–22 (AGKELEVKKKGGK) the composition is skewed to basic and acidic residues. Coiled-coil stretches lie at residues 33–189 (LAKE…LEKK) and 236–372 (LQMA…QATS). The tract at residues 416-453 (PQKAACPHQESQSHGPPKESRPSIQLPRTGSLLPQLSD) is disordered. A compositionally biased stretch (polar residues) spans 437-453 (PSIQLPRTGSLLPQLSD).

It belongs to the CFAP157 family. In terms of assembly, interacts with TUBB and TUBA4A. Interacts with CEP350.

It localises to the cytoplasm. It is found in the cytoskeleton. The protein localises to the cilium basal body. Its function is as follows. Specifically required during spermatogenesis for flagellum morphogenesis and sperm motility. May be required to suppress the formation of supernumerary axonemes and ensure a correct ultrastructure. This is Cilia- and flagella-associated protein 157 from Homo sapiens (Human).